The chain runs to 51 residues: Glutamine synthetase (51 aa).

It belongs to the glutamine synthetase family. In terms of assembly, homooctamer.

The protein localises to the cytoplasm. It catalyses the reaction L-glutamate + NH4(+) + ATP = L-glutamine + ADP + phosphate + H(+). The sequence is that of Glutamine synthetase from Vitis sp. (Grape).